A 363-amino-acid chain; its full sequence is HAUS augmin-like complex subunit 4 (363 aa).

Belongs to the HAUS4 family. In terms of assembly, component of the HAUS augmin-like complex. The complex interacts with the gamma-tubulin ring complex and this interaction is required for spindle assembly. Interacts with EML3 (phosphorylated at 'Thr-881').

It localises to the cytoplasm. The protein resides in the cytoskeleton. The protein localises to the microtubule organizing center. Its subcellular location is the centrosome. It is found in the spindle. Its function is as follows. Contributes to mitotic spindle assembly, maintenance of centrosome integrity and completion of cytokinesis as part of the HAUS augmin-like complex. The polypeptide is HAUS augmin-like complex subunit 4 (HAUS4) (Homo sapiens (Human)).